A 157-amino-acid polypeptide reads, in one-letter code: UPF0225 protein PMI1492 (157 aa).

The protein belongs to the UPF0225 family.

This is UPF0225 protein PMI1492 from Proteus mirabilis (strain HI4320).